Here is a 1240-residue protein sequence, read N- to C-terminus: ABC transporter B family member 15 (1240 aa).

A run of 6 helical transmembrane segments spans residues 35 to 55 (MGLGLIGAVGDGFTTPLVLLI), 82 to 102 (VALLYVACGSWVVCFLEGYCW), 158 to 180 (LPNFLMSASTFVGSYIVGFILLW), 184 to 206 (IVGLPFIVLLVIPGLMYGRALIS), 264 to 284 (GITIGSNGITFAMWGFMSWYG), and 296 to 316 (GTVFAVAAAIAIGGVSLGGGL). Positions 35 to 324 (MGLGLIGAVG…GLSNLKYFFE (290 aa)) constitute an ABC transmembrane type-1 1 domain. Positions 359–595 (VEFKNVKFVY…IDGQYSTLVH (237 aa)) constitute an ABC transporter 1 domain. 394–401 (GGSGSGKS) contacts ATP. Residues N542, N605, and N622 are each glycosylated (N-linked (GlcNAc...) asparagine). The tract at residues 617 to 646 (SKDIRNSSRVSTLSRSSSANSVTGPSTIKN) is disordered. The segment covering 623 to 639 (SSRVSTLSRSSSANSVT) has biased composition (low complexity). N646 carries an N-linked (GlcNAc...) asparagine glycan. The ABC transmembrane type-1 2 domain maps to 672–960 (ALYGCISATL…AGSMTTDLAK (289 aa)). A run of 2 helical transmembrane segments spans residues 681-701 (LFGAIQPAYAYSLGSMVSVYF) and 714-734 (IYALSFVGLAVLSFLINISQH). An N-linked (GlcNAc...) asparagine glycan is attached at N769. The next 4 membrane-spanning stretches (helical) occupy residues 794 to 813 (ALVVQTVSAVTIAFTMGLVI), 817 to 839 (LALVMIAVQPVIIVCFYTRRVLL), 895 to 915 (SWFAGFGLAMSQSLTSCTWAL), and 923 to 943 (LIQDGYITAKALFETFMILVS). Residues 995–1233 (VEFLDVDFSY…GPTGIYFSLV (239 aa)) form the ABC transporter 2 domain. N1015 is a glycosylation site (N-linked (GlcNAc...) asparagine). 1030 to 1037 (GPSGSGKS) is a binding site for ATP.

The protein belongs to the ABC transporter superfamily. ABCB family. Multidrug resistance exporter (TC 3.A.1.201) subfamily.

It localises to the membrane. This Arabidopsis thaliana (Mouse-ear cress) protein is ABC transporter B family member 15 (ABCB15).